Reading from the N-terminus, the 367-residue chain is Glutamate 5-kinase (367 aa).

ATP is bound at residue K9. S49, D136, and N148 together coordinate substrate. Residues T168–D169 and T210–K216 each bind ATP. The 75-residue stretch at S276–R350 folds into the PUA domain.

This sequence belongs to the glutamate 5-kinase family.

The protein localises to the cytoplasm. The enzyme catalyses L-glutamate + ATP = L-glutamyl 5-phosphate + ADP. The protein operates within amino-acid biosynthesis; L-proline biosynthesis; L-glutamate 5-semialdehyde from L-glutamate: step 1/2. In terms of biological role, catalyzes the transfer of a phosphate group to glutamate to form L-glutamate 5-phosphate. The chain is Glutamate 5-kinase from Bacillus mycoides (strain KBAB4) (Bacillus weihenstephanensis).